The chain runs to 288 residues: Protease HtpX homolog (288 aa).

The next 2 helical transmembrane spans lie at 6 to 26 (TAFL…YVGG) and 28 to 48 (QGMM…YFFS). His130 lines the Zn(2+) pocket. Glu131 is a catalytic residue. His134 contacts Zn(2+). 2 helical membrane-spanning segments follow: residues 140–160 (ILTG…ANFA) and 179–199 (VIML…QMAI). Glu204 contacts Zn(2+).

The protein belongs to the peptidase M48B family. The cofactor is Zn(2+).

It localises to the cell inner membrane. In Campylobacter concisus (strain 13826), this protein is Protease HtpX homolog.